Reading from the N-terminus, the 748-residue chain is MAADKAGEQGAEKHEDSANCSGISDHEKELSRSALQAFTAGNYEACLQHLGELKEINKDDYKVILNSAVAEFYKSDQTTTDLLKQTLNQLRNEVHSAIDEIDSLDDVENSMLYYNQAVILYYLRQHMEAISIGEKLYQFIEPFKEKFAHAVCFLLVDLYLLTFQTEKALHLLVVLEKMILQGHSNNKNGKNNETNSNANNREPFAQRGDGGVHVEAAKSKIHQYKVRAYIQMKSLKACKREIKSVMNTSGNSAPSLFLKSNFEYLRGNYRKAVKLLNSSNIAEYPGFMKTGECVRCMFWNNLGCIHFAMGKHNLGLFYFKKALQENDNTCAQLPSSNTDPGKKFSSRPMCTLLTNKRYELLYNCGIQLLHIGRPLAAFEYLIEAVQVYHSNPRLWLRLAECCIAANKGTSEQETKGLPSKKGIVQSIVGQGYHRKIVLASQSVQNLLYNDGESSAIPVASMEFAAICLRNALLLLPEDQFDAKQENGSKTSSQTGNTDSGGESSEVCSNKSHEGDKFIPAPPSSPLKRQEVENLRCSVLACSAYVGLALGDNLMALNHAEKLLQQPRLSGSLKFLGHLYAAEALISLDRISDAITHLNPENVTDVSLGVSSNEQEQGSDKGENEPMESVGKQMPQCYPSSVTSARTMMLFNLGSAYCLRSEYDKARKCLHQAASMIHPKEIPPEAILLAVYLELQNGNTQLALQIIKRNQLLPSIRMMSDLRKKPLFQTMHQPMQPIQMPAFTAVQRK.

Over residues 1–17 (MAADKAGEQGAEKHEDS) the composition is skewed to basic and acidic residues. Disordered regions lie at residues 1-25 (MAAD…GISD), 184-205 (SNNK…EPFA), 483-524 (KQEN…PPSS), and 605-635 (VSLG…QMPQ). The segment covering 185–200 (NNKNGKNNETNSNANN) has biased composition (low complexity). Composition is skewed to polar residues over residues 487-509 (GSKT…VCSN) and 605-615 (VSLGVSSNEQE).

It belongs to the CNOT10 family. In terms of assembly, component of the CCR4-NOT complex. cnot10 and cnot11 form a subcomplex docked to the cnot1 scaffold.

Its subcellular location is the cytoplasm. The protein resides in the nucleus. Its function is as follows. Component of the CCR4-NOT complex which is one of the major cellular mRNA deadenylases and is linked to various cellular processes including bulk mRNA degradation, miRNA-mediated repression, translational repression during translational initiation and general transcription regulation. Additional complex functions may be a consequence of its influence on mRNA expression. Is not required for association of CNOT7 to the CCR4-NOT complex. The chain is CCR4-NOT transcription complex subunit 10-A (cnot10-a) from Xenopus laevis (African clawed frog).